Here is a 409-residue protein sequence, read N- to C-terminus: Argininosuccinate synthase (409 aa).

Residues A10–S18 and A37 contribute to the ATP site. Residues Y90 and S95 each contribute to the L-citrulline site. ATP is bound at residue G120. L-aspartate is bound by residues T122, N126, and D127. N126 is an L-citrulline binding site. The L-citrulline site is built by R130, S182, S191, E267, and Y279.

The protein belongs to the argininosuccinate synthase family. Type 1 subfamily. Homotetramer.

It localises to the cytoplasm. The catalysed reaction is L-citrulline + L-aspartate + ATP = 2-(N(omega)-L-arginino)succinate + AMP + diphosphate + H(+). Its pathway is amino-acid biosynthesis; L-arginine biosynthesis; L-arginine from L-ornithine and carbamoyl phosphate: step 2/3. In Azoarcus sp. (strain BH72), this protein is Argininosuccinate synthase.